Reading from the N-terminus, the 348-residue chain is Spermidine/putrescine-binding periplasmic protein (348 aa).

The N-terminal stretch at Met1–Ala23 is a signal peptide. Spermidine-binding positions include Glu36, Tyr85, Asp168–Glu171, and Gln327.

Belongs to the bacterial solute-binding protein PotD/PotF family.

Its subcellular location is the periplasm. In terms of biological role, required for the activity of the bacterial periplasmic transport system of putrescine and spermidine. Polyamine binding protein. In Escherichia coli (strain K12), this protein is Spermidine/putrescine-binding periplasmic protein (potD).